We begin with the raw amino-acid sequence, 462 residues long: Transcription initiation factor TFIID subunit 7-like (462 aa).

Disordered regions lie at residues 1–97 (MECP…VPDE) and 327–366 (DSRS…SEEY). Composition is skewed to low complexity over residues 16–30 (STPT…SQQE) and 66–77 (DADSSAQAAAQA). The segment covering 333–365 (DDDEDEDDEDEDEDEDEDEDEDKEEEEEDCSEE) has biased composition (acidic residues). The stretch at 342–462 (DEDEDEDEDE…QEQLQRFLKK (121 aa)) forms a coiled coil.

This sequence belongs to the TAF7 family. TFIID is composed of TATA binding protein (TBP) and a number of TBP-associated factors (TAFs). TAF7L may replace TAF7 in a spermatogenesis-specific form of TFIID. Interacts with TBP; the interaction occurs in a sub-population of cells (pachytene and haploid round spermatids) and is developmentally regulated through differential intracellular localization of the two proteins. Interacts with TAF1. In terms of tissue distribution, testis-specific.

Its subcellular location is the nucleus. The protein resides in the cytoplasm. Functionally, probably functions as a spermatogenesis-specific component of the DNA-binding general transcription factor complex TFIID, a multimeric protein complex that plays a central role in mediating promoter responses to various activators and repressors. May play a role in spermatogenesis. The protein is Transcription initiation factor TFIID subunit 7-like (TAF7L) of Homo sapiens (Human).